Here is a 211-residue protein sequence, read N- to C-terminus: Uracil phosphoribosyltransferase (211 aa).

5-phospho-alpha-D-ribose 1-diphosphate contacts are provided by residues R77, R102, and 129–137; that span reads DPMLATGGS. Uracil-binding positions include I192 and 197–199; that span reads GDA. D198 is a binding site for 5-phospho-alpha-D-ribose 1-diphosphate.

The protein belongs to the UPRTase family. Mg(2+) serves as cofactor.

It carries out the reaction UMP + diphosphate = 5-phospho-alpha-D-ribose 1-diphosphate + uracil. Its pathway is pyrimidine metabolism; UMP biosynthesis via salvage pathway; UMP from uracil: step 1/1. With respect to regulation, allosterically activated by GTP. In terms of biological role, catalyzes the conversion of uracil and 5-phospho-alpha-D-ribose 1-diphosphate (PRPP) to UMP and diphosphate. The chain is Uracil phosphoribosyltransferase from Corynebacterium diphtheriae (strain ATCC 700971 / NCTC 13129 / Biotype gravis).